Consider the following 200-residue polypeptide: Cuticle protein 21.3 (200 aa).

10 consecutive repeat copies span residues 98-101 (AAPA), 104-107 (AAPA), 116-119 (AAPA), 121-124 (AAPA), 133-136 (AAPA), 154-157 (AAPA), 166-169 (AAPA), 178-181 (AAPA), 184-187 (AAPA), and 196-199 (AAPA).

Functionally, component of the cuticle of migratory locust which contains more than 100 different structural proteins. This chain is Cuticle protein 21.3, found in Locusta migratoria (Migratory locust).